We begin with the raw amino-acid sequence, 263 residues long: Post-GPI attachment to proteins factor 2 (263 aa).

Transmembrane regions (helical) follow at residues 16–36 (FVIC…ILSL), 69–89 (YIWR…AIAF), 109–129 (FLCN…LALT), 143–163 (CFGG…WLFN), 180–200 (YKIL…YLYW), and 208–228 (PGIY…NIFF).

It belongs to the PGAP2 family.

It localises to the golgi apparatus membrane. Its subcellular location is the endoplasmic reticulum membrane. Its function is as follows. Involved in the lipid remodeling steps of GPI-anchor maturation. Required for stable expression of GPI-anchored proteins at the cell surface. This chain is Post-GPI attachment to proteins factor 2, found in Caenorhabditis elegans.